Consider the following 102-residue polypeptide: Carboxysome shell protein CsoS1C (102 aa).

Positions 8 to 93 (ALGMIETRGL…PHKEVEPVLA (86 aa)) constitute a BMC domain.

Belongs to the bacterial microcompartments protein family. CsoS1 subfamily. Homohexamer with a small central pore.

The protein localises to the carboxysome. Functionally, one of shell proteins of the carboxysome, a polyhedral inclusion where RuBisCO (ribulose bisphosphate carboxylase, ccbL-ccbS) is sequestered. Assembles into hexamers which make sheets that form the facets of the polyhedral carboxysome. The shell probably limits the diffusion of CO(2) into and out of the carboxysome. This Hydrogenovibrio crunogenus (strain DSM 25203 / XCL-2) (Thiomicrospira crunogena) protein is Carboxysome shell protein CsoS1C.